Consider the following 251-residue polypeptide: Pyruvate formate-lyase-activating enzyme (251 aa).

Positions 15 to 244 (VDGPGLRYIL…KEAYRYVNFN (230 aa)) constitute a Radical SAM core domain. The [4Fe-4S] cluster site is built by cysteine 29, cysteine 33, and cysteine 36. S-adenosyl-L-methionine contacts are provided by residues 35–37 (YCH), glycine 79, 134–136 (DIK), and histidine 207.

It belongs to the organic radical-activating enzymes family. The cofactor is [4Fe-4S] cluster.

It localises to the cytoplasm. It carries out the reaction glycyl-[formate C-acetyltransferase] + reduced [flavodoxin] + S-adenosyl-L-methionine = glycin-2-yl radical-[formate C-acetyltransferase] + semiquinone [flavodoxin] + 5'-deoxyadenosine + L-methionine + H(+). Activation of pyruvate formate-lyase under anaerobic conditions by generation of an organic free radical, using S-adenosylmethionine and reduced flavodoxin as cosubstrates to produce 5'-deoxy-adenosine. The chain is Pyruvate formate-lyase-activating enzyme (pflA) from Staphylococcus epidermidis (strain ATCC 12228 / FDA PCI 1200).